The following is an 899-amino-acid chain: Probable dipeptidyl-aminopeptidase B (899 aa).

2 disordered regions span residues methionine 1–serine 37 and lysine 51–serine 84. At methionine 1–arginine 91 the chain is on the cytoplasmic side. Low complexity predominate over residues serine 22–serine 37. The segment covering asparagine 61–aspartate 74 has biased composition (basic and acidic residues). A helical; Signal-anchor for type II membrane protein membrane pass occupies residues leucine 92–tryptophan 112. At glycine 113 to threonine 899 the chain is on the vacuolar side. N-linked (GlcNAc...) asparagine glycosylation is found at asparagine 149, asparagine 194, asparagine 347, asparagine 409, asparagine 513, asparagine 638, and asparagine 643. Serine 752 serves as the catalytic Charge relay system. N-linked (GlcNAc...) asparagine glycosylation is present at asparagine 811. Catalysis depends on charge relay system residues aspartate 829 and histidine 862.

This sequence belongs to the peptidase S9B family.

The protein resides in the vacuole membrane. The enzyme catalyses Release of an N-terminal dipeptide, Xaa-Yaa-|-Zaa-, from a polypeptide, preferentially when Yaa is Pro, provided Zaa is neither Pro nor hydroxyproline.. Type IV dipeptidyl-peptidase which removes N-terminal dipeptides sequentially from polypeptides having unsubstituted N-termini provided that the penultimate residue is proline. In Talaromyces marneffei (strain ATCC 18224 / CBS 334.59 / QM 7333) (Penicillium marneffei), this protein is Probable dipeptidyl-aminopeptidase B (dapB).